A 309-amino-acid polypeptide reads, in one-letter code: NADH-cytochrome b5 reductase 2 (309 aa).

Residues I3–F23 traverse the membrane as a helical segment. Residues S48 to N160 form the FAD-binding FR-type domain. FAD is bound by residues D140–D170 and K179–L214.

The protein belongs to the flavoprotein pyridine nucleotide cytochrome reductase family. Requires FAD as cofactor.

It is found in the membrane. The enzyme catalyses 2 Fe(III)-[cytochrome b5] + NADH = 2 Fe(II)-[cytochrome b5] + NAD(+) + H(+). NADH-cytochrome b5 reductases are involved in desaturation and elongation of fatty acids, cholesterol biosynthesis and drug metabolism. The sequence is that of NADH-cytochrome b5 reductase 2 (cyb5r2) from Danio rerio (Zebrafish).